We begin with the raw amino-acid sequence, 1287 residues long: SCL-interrupting locus protein (1287 aa).

Met1 is modified (N-acetylmethionine). The interval 1–1018 (MEPIYPFARP…IDSPTKVKKN (1018 aa)) is interaction with RBM14. Positions 231 to 781 (YKYGYLTMDE…VSVEAQSSPG (551 aa)) are interaction with CPAP. Disordered regions lie at residues 378 to 417 (RSSQ…SQKI) and 508 to 533 (PPAY…PSHD). Ser395 is subject to Phosphoserine. Over residues 517 to 529 (HTRNSIKPSSHNG) the composition is skewed to polar residues. The segment at 584–779 (PMELQIPTPP…ELVSVEAQSS (196 aa)) is PIN1-binding. 3 positions are modified to phosphoserine: Ser753, Ser779, and Ser1135.

Homodimer. Interacts with PIN1 via its WW domain. This interaction is dependent on STIL mitotic phosphorylation. Interacts with CPAP. Interacts with RBM14 and this interaction interferes with the interaction of STIL with CPAP. Forms a complex with CPAP and SASS6. Interacts (via N-terminus) with CEP85; this interaction is essential for efficient centriolar targeting of STIL and subsequent PLK4 activation. Post-translationally, ubiquitinated. Phosphorylated following the activation of the mitotic checkpoint. Expressed in all hematopoietic tissues and cell lines. Highly expressed in a variety of tumors characterized by increased mitotic activity with highest expression in lung cancer.

The protein localises to the cytoplasm. The protein resides in the cytosol. Its subcellular location is the cytoskeleton. It localises to the microtubule organizing center. It is found in the centrosome. The protein localises to the centriole. The protein resides in the cell cortex. Its function is as follows. Immediate-early gene. Plays an important role in embryonic development as well as in cellular growth and proliferation; its long-term silencing affects cell survival and cell cycle distribution as well as decreases CDK1 activity correlated with reduced phosphorylation of CDK1. Plays a role as a positive regulator of the sonic hedgehog pathway, acting downstream of PTCH1. Plays an important role in the regulation of centriole duplication. Required for the onset of procentriole formation and proper mitotic progression. During procentriole formation, is essential for the correct loading of SASS6 and CPAP to the base of the procentriole to initiate procentriole assembly. In complex with STIL acts as a modulator of PLK4-driven cytoskeletal rearrangements and directional cell motility. This is SCL-interrupting locus protein (STIL) from Homo sapiens (Human).